An 81-amino-acid polypeptide reads, in one-letter code: Photosystem I iron-sulfur center (81 aa).

4Fe-4S ferredoxin-type domains follow at residues 2-31 (AHAV…MIPW) and 39-68 (IASA…VRVY). Cys-11, Cys-14, Cys-17, Cys-21, Cys-48, Cys-51, Cys-54, and Cys-58 together coordinate [4Fe-4S] cluster.

As to quaternary structure, the eukaryotic PSI reaction center is composed of at least 11 subunits. [4Fe-4S] cluster serves as cofactor.

The protein localises to the plastid. It is found in the chloroplast thylakoid membrane. The catalysed reaction is reduced [plastocyanin] + hnu + oxidized [2Fe-2S]-[ferredoxin] = oxidized [plastocyanin] + reduced [2Fe-2S]-[ferredoxin]. Its function is as follows. Apoprotein for the two 4Fe-4S centers FA and FB of photosystem I (PSI); essential for photochemical activity. FB is the terminal electron acceptor of PSI, donating electrons to ferredoxin. The C-terminus interacts with PsaA/B/D and helps assemble the protein into the PSI complex. Required for binding of PsaD and PsaE to PSI. PSI is a plastocyanin-ferredoxin oxidoreductase, converting photonic excitation into a charge separation, which transfers an electron from the donor P700 chlorophyll pair to the spectroscopically characterized acceptors A0, A1, FX, FA and FB in turn. The protein is Photosystem I iron-sulfur center of Marchantia polymorpha (Common liverwort).